Consider the following 1601-residue polypeptide: Rap guanine nucleotide exchange factor 6 (1601 aa).

M1 carries the post-translational modification N-acetylmethionine. 2 disordered regions span residues 1–22 and 179–250; these read MNSP…ERTP and PHPQ…QGRD. Phosphoserine is present on S3. Over residues 187-205 the composition is skewed to low complexity; sequence SSSQSGCSIASDSGSSSLS. Over residues 228–241 the composition is skewed to acidic residues; sequence VDSEDDEEEDEEID. 280–399 is a binding site for a nucleoside 3',5'-cyclic phosphate; that stretch reads AFANMTMSVR…VEEEGEIVMV (120 aa). The N-terminal Ras-GEF domain occupies 412–526; it reads KGHIVIKATP…LLNIACAAKA (115 aa). Positions 530–615 constitute a PDZ domain; it reads QVVLQKASRE…LTVKTNIFVF (86 aa). A Ras-associating domain is found at 749–835; that stretch reads PDQVIRVFKV…GRYYLKNNME (87 aa). The region spanning 860 to 1088 is the Ras-GEF domain; sequence STIEVATQLS…LDVQGGAHKK (229 aa). Disordered regions lie at residues 1192-1274, 1302-1324, 1455-1478, and 1571-1601; these read IRKK…SRSS, ESTG…QHGP, LEST…VYKT, and QRHN…VSAV. Composition is skewed to low complexity over residues 1229 to 1238 and 1255 to 1274; these read SVASSLHSSP and SAKS…SRSS. A compositionally biased stretch (acidic residues) spans 1586-1601; it reads TDADSEADENEQVSAV.

As to quaternary structure, interacts with the second PDZ domain of human PTP1e. As to expression, isoform 3 has highest expression levels in the brain, heart, liver, lung and placenta and is barely detectable in skeletal muscle, kidney and pancreas.

The protein resides in the cytoplasm. The protein localises to the cell membrane. Guanine nucleotide exchange factor (GEF) for Rap1A, Rap2A and M-Ras GTPases. Does not interact with cAMP. The protein is Rap guanine nucleotide exchange factor 6 (RAPGEF6) of Homo sapiens (Human).